The primary structure comprises 247 residues: 14-3-3 protein gamma (247 aa).

Met1 is subject to N-acetylmethionine; in 14-3-3 protein gamma; alternate; partial. Val2 is subject to N-acetylvaline; in 14-3-3 protein gamma, N-terminally processed; partial. Val2 bears the N-acetylvaline; partial mark. Residues 2-166 (VDREQLVQKA…AHEISKEHMQ (165 aa)) form a required for interaction with SPATA18/MIEAP (isoform 2) but dispensable for binding to SPATA18/MIEAP (isoform 1) region. The interval 2 to 247 (VDREQLVQKA…QDDDGGEGNN (246 aa)) is interaction with SPATA18/MIEAP. Ser71 bears the Phosphoserine mark. At Tyr133 the chain carries Phosphotyrosine. Thr145 carries the post-translational modification Phosphothreonine. Position 215 is a phosphoserine (Ser215). Thr234 carries the phosphothreonine modification. Ser235 bears the Phosphoserine mark.

The protein belongs to the 14-3-3 family. Homodimer. Part of a complex that contains DSG3, PKP1, YAP1 and YWHAG; the complex is required for localization of DSG3 and YAP1 to the cell membrane in keratinocytes. Interacts with SAMSN1. Interacts with RAF1, SSH1 and CRTC2/TORC2. Interacts with ABL1 (phosphorylated form); the interaction retains it in the cytoplasm. Interacts with GAB2. Interacts with MDM4 (phosphorylated); negatively regulates MDM4 activity toward TP53. Interacts with PKA-phosphorylated AANAT and SIRT2. Interacts with the 'Thr-369' phosphorylated form of DAPK2. Interacts with PI4KB, TBC1D22A and TBC1D22B. Interacts with SLITRK1. Interacts with LRRK2; this interaction is dependent on LRRK2 phosphorylation. Interacts with MARK2 and MARK3. Interacts with MEFV. Interacts with ENDOG, TSC2 and PIK3C3; interaction with ENDOG weakens its interaction with TSC2 and PIK3C3. Interacts with (phosphorylated) WDR24. Interacts with BEST1; this interaction promotes L-glutamate channel activity leading to the positive regulation of NMDA glutamate receptor activity through the L-glutamate secretion. Interacts with PKP1 (when phosphorylated); the interaction results in translocation of PKP1 to the cytoplasm and loss of intercellular adhesion in keratinocytes. Interacts with SPATA18/MIEAP (isoforms 1 and 2); a protein that also plays a role in MALM. In terms of processing, phosphorylated by various PKC isozymes. In terms of tissue distribution, highly expressed in brain, skeletal muscle, and heart.

It is found in the cytoplasm. The protein localises to the cytosol. Its subcellular location is the mitochondrion matrix. Its function is as follows. Adapter protein implicated in the regulation of a large spectrum of both general and specialized signaling pathways. Binds to a large number of partners, usually by recognition of a phosphoserine or phosphothreonine motif. Binding generally results in the modulation of the activity of the binding partner. Promotes inactivation of WDR24 component of the GATOR2 complex by binding to phosphorylated WDR24. Participates in the positive regulation of NMDA glutamate receptor activity by promoting the L-glutamate secretion through interaction with BEST1. Reduces keratinocyte intercellular adhesion, via interacting with PKP1 and sequestering it in the cytoplasm, thereby reducing its incorporation into desmosomes. Plays a role in mitochondrial protein catabolic process (also named MALM) that promotes the degradation of damaged proteins inside mitochondria. The polypeptide is 14-3-3 protein gamma (Homo sapiens (Human)).